An 84-amino-acid chain; its full sequence is Large ribosomal subunit protein bL27 (84 aa).

The protein belongs to the bacterial ribosomal protein bL27 family.

In Buchnera aphidicola subsp. Schizaphis graminum (strain Sg), this protein is Large ribosomal subunit protein bL27.